Consider the following 1051-residue polypeptide: Ubiquitin carboxyl-terminal hydrolase 28 (1051 aa).

Positions 60–82 (DQRVKEPSHDTTAAEPSEVEESA) are disordered. Residue S67 is modified to Phosphoserine. Residues 97 to 116 (DNKDDLQAAIALSLLESPNI) form the UIM domain. A Glycyl lysine isopeptide (Lys-Gly) (interchain with G-Cter in SUMO2) cross-link involves residue K99. The segment covering 121-135 (RDLNRAHEANSAETK) has biased composition (basic and acidic residues). The interval 121–140 (RDLNRAHEANSAETKRSKRK) is disordered. A USP domain is found at 162 to 655 (VGLKNVGNTC…SAYCLMYIND (494 aa)). C171 functions as the Nucleophile in the catalytic mechanism. A Phosphoserine modification is found at S376. The interval 483-538 (DLTPKESSSPESCSQNAGSTFSSPEDALPSSEGMNGPFTSPHSSLETPAPPAPRTV) is disordered. Composition is skewed to polar residues over residues 487 to 505 (KESSSPESCSQNAGSTFSS) and 519 to 528 (PFTSPHSSLE). Position 555 is a phosphoserine (S555). Catalysis depends on H605, which acts as the Proton acceptor. The interval 703 to 735 (EEQSCKIPQMESSPNSSSQDFSTSQESPAVSSH) is disordered. The segment covering 713 to 730 (ESSPNSSSQDFSTSQESP) has biased composition (low complexity). S720 carries the phosphoserine modification. T1022 carries the post-translational modification Phosphothreonine.

This sequence belongs to the peptidase C19 family. USP28 subfamily. Interacts with ZNF304. Interacts with PRKD1. Interacts with TP53BP1. Interacts with FBXW7; following DNA damage, dissociates from FBXW7 leading to degradation of MYC. Degraded upon nickel ion level or hypoxia exposure. In terms of processing, phosphorylated upon DNA damage at Ser-67 and Ser-720, by ATM or ATR. Phosphorylated by PRKD1.

The protein localises to the nucleus. It localises to the nucleoplasm. The enzyme catalyses Thiol-dependent hydrolysis of ester, thioester, amide, peptide and isopeptide bonds formed by the C-terminal Gly of ubiquitin (a 76-residue protein attached to proteins as an intracellular targeting signal).. In terms of biological role, deubiquitinase involved in DNA damage response checkpoint and MYC proto-oncogene stability. Involved in DNA damage induced apoptosis by specifically deubiquitinating proteins of the DNA damage pathway such as CLSPN. Also involved in G2 DNA damage checkpoint, by deubiquitinating CLSPN, and preventing its degradation by the anaphase promoting complex/cyclosome (APC/C). In contrast, it does not deubiquitinate PLK1. Specifically deubiquitinates MYC in the nucleoplasm, leading to prevent MYC degradation by the proteasome: acts by specifically interacting with FBXW7 (FBW7alpha) in the nucleoplasm and counteracting ubiquitination of MYC by the SCF(FBXW7) complex. Deubiquitinates ZNF304, hence preventing ZNF304 degradation by the proteasome and leading to the activated KRAS-mediated promoter hypermethylation and transcriptional silencing of tumor suppressor genes (TSGs) in a subset of colorectal cancers (CRC) cells. This Mus musculus (Mouse) protein is Ubiquitin carboxyl-terminal hydrolase 28 (Usp28).